Here is a 170-residue protein sequence, read N- to C-terminus: Adenine phosphoribosyltransferase (170 aa).

The protein belongs to the purine/pyrimidine phosphoribosyltransferase family. In terms of assembly, homodimer.

The protein localises to the cytoplasm. It carries out the reaction AMP + diphosphate = 5-phospho-alpha-D-ribose 1-diphosphate + adenine. It participates in purine metabolism; AMP biosynthesis via salvage pathway; AMP from adenine: step 1/1. In terms of biological role, catalyzes a salvage reaction resulting in the formation of AMP, that is energically less costly than de novo synthesis. This is Adenine phosphoribosyltransferase from Bacillus velezensis (strain DSM 23117 / BGSC 10A6 / LMG 26770 / FZB42) (Bacillus amyloliquefaciens subsp. plantarum).